Here is a 208-residue protein sequence, read N- to C-terminus: Uracil phosphoribosyltransferase (208 aa).

5-phospho-alpha-D-ribose 1-diphosphate is bound by residues arginine 78, arginine 103, and 130–138 (DPMLATGGS). Residues isoleucine 193 and 198-200 (GDA) contribute to the uracil site. Residue aspartate 199 participates in 5-phospho-alpha-D-ribose 1-diphosphate binding.

The protein belongs to the UPRTase family. Mg(2+) serves as cofactor.

The catalysed reaction is UMP + diphosphate = 5-phospho-alpha-D-ribose 1-diphosphate + uracil. It functions in the pathway pyrimidine metabolism; UMP biosynthesis via salvage pathway; UMP from uracil: step 1/1. Its activity is regulated as follows. Allosterically activated by GTP. Its function is as follows. Catalyzes the conversion of uracil and 5-phospho-alpha-D-ribose 1-diphosphate (PRPP) to UMP and diphosphate. The chain is Uracil phosphoribosyltransferase from Proteus mirabilis (strain HI4320).